The primary structure comprises 234 residues: Large ribosomal subunit protein uL1 (234 aa).

Belongs to the universal ribosomal protein uL1 family. As to quaternary structure, part of the 50S ribosomal subunit.

Functionally, binds directly to 23S rRNA. The L1 stalk is quite mobile in the ribosome, and is involved in E site tRNA release. Protein L1 is also a translational repressor protein, it controls the translation of the L11 operon by binding to its mRNA. The protein is Large ribosomal subunit protein uL1 of Vibrio atlanticus (strain LGP32) (Vibrio splendidus (strain Mel32)).